A 51-amino-acid polypeptide reads, in one-letter code: Large ribosomal subunit protein eL39 (51 aa).

Belongs to the eukaryotic ribosomal protein eL39 family.

This chain is Large ribosomal subunit protein eL39, found in Methanosarcina acetivorans (strain ATCC 35395 / DSM 2834 / JCM 12185 / C2A).